A 227-amino-acid polypeptide reads, in one-letter code: Cytochrome c oxidase subunit 2 (227 aa).

The Mitochondrial intermembrane segment spans residues 1–14; that stretch reads MAHAAQVGLQDATS. Residues 15 to 45 form a helical membrane-spanning segment; the sequence is PIMEELIIFHDHALMIIFLICFLVLYALFLT. Residues 46 to 59 are Mitochondrial matrix-facing; the sequence is LTTKLTNTSISDAQ. Residues 60–87 form a helical membrane-spanning segment; sequence EMETVWTILPAIILVLIALPSLRILYMT. Over 88–227 the chain is Mitochondrial intermembrane; that stretch reads DEVNDPSFTI…IFEMGPVFTL (140 aa). Residues His-161, Cys-196, Glu-198, Cys-200, His-204, and Met-207 each coordinate Cu cation. Glu-198 provides a ligand contact to Mg(2+).

This sequence belongs to the cytochrome c oxidase subunit 2 family. Component of the cytochrome c oxidase (complex IV, CIV), a multisubunit enzyme composed of 14 subunits. The complex is composed of a catalytic core of 3 subunits MT-CO1, MT-CO2 and MT-CO3, encoded in the mitochondrial DNA, and 11 supernumerary subunits COX4I, COX5A, COX5B, COX6A, COX6B, COX6C, COX7A, COX7B, COX7C, COX8 and NDUFA4, which are encoded in the nuclear genome. The complex exists as a monomer or a dimer and forms supercomplexes (SCs) in the inner mitochondrial membrane with NADH-ubiquinone oxidoreductase (complex I, CI) and ubiquinol-cytochrome c oxidoreductase (cytochrome b-c1 complex, complex III, CIII), resulting in different assemblies (supercomplex SCI(1)III(2)IV(1) and megacomplex MCI(2)III(2)IV(2)). Found in a complex with TMEM177, COA6, COX18, COX20, SCO1 and SCO2. Interacts with TMEM177 in a COX20-dependent manner. Interacts with COX20. Interacts with COX16. It depends on Cu cation as a cofactor.

The protein resides in the mitochondrion inner membrane. It catalyses the reaction 4 Fe(II)-[cytochrome c] + O2 + 8 H(+)(in) = 4 Fe(III)-[cytochrome c] + 2 H2O + 4 H(+)(out). Functionally, component of the cytochrome c oxidase, the last enzyme in the mitochondrial electron transport chain which drives oxidative phosphorylation. The respiratory chain contains 3 multisubunit complexes succinate dehydrogenase (complex II, CII), ubiquinol-cytochrome c oxidoreductase (cytochrome b-c1 complex, complex III, CIII) and cytochrome c oxidase (complex IV, CIV), that cooperate to transfer electrons derived from NADH and succinate to molecular oxygen, creating an electrochemical gradient over the inner membrane that drives transmembrane transport and the ATP synthase. Cytochrome c oxidase is the component of the respiratory chain that catalyzes the reduction of oxygen to water. Electrons originating from reduced cytochrome c in the intermembrane space (IMS) are transferred via the dinuclear copper A center (CU(A)) of subunit 2 and heme A of subunit 1 to the active site in subunit 1, a binuclear center (BNC) formed by heme A3 and copper B (CU(B)). The BNC reduces molecular oxygen to 2 water molecules using 4 electrons from cytochrome c in the IMS and 4 protons from the mitochondrial matrix. The chain is Cytochrome c oxidase subunit 2 (MT-CO2) from Pan paniscus (Pygmy chimpanzee).